Reading from the N-terminus, the 1021-residue chain is PDZ domain-containing protein 7 (1021 aa).

PDZ domains follow at residues Ala-86–Ser-156 and Ile-210–Lys-279. Positions Ser-324 to Ser-344 are enriched in low complexity. Disordered stretches follow at residues Ser-324–Asp-345, Ile-431–Ser-495, and Arg-724–Arg-814. Over residues Ala-729–Pro-744 the composition is skewed to pro residues. Residues Gln-758–Gln-767 are compositionally biased toward polar residues. Basic residues predominate over residues Ser-772–Ser-794. The segment covering Pro-799–Gly-808 has biased composition (low complexity). The region spanning Thr-858 to Ala-930 is the PDZ 3 domain. Positions Gln-992–Ser-1021 are disordered.

Homodimerizes (via PDZ2 domain). Component of USH2 complex, composed of ADGRV1, PDZD7, USH2A and WHRN. Interacts (via PDZ domains) with WHRN; the interaction is direct. Interacts with USH1G. Interacts with ADGRV1 (via the cytoplasmic region). Interacts with USH2A (via the cytoplasmic region). Interacts with MYO7A (via MyTH4-FERM domains). As to expression, isoform 1 is expressed in developing and adult cochlea but not retina. Isoform 2 is expressed in developing and adult cochlea and retina. Isoform 3 is expressed in adult cochlea and retina. Isoform 4 is expressed in retina and developing cochlea but not adult cochlea. Isoform 5 is expressed in adult cochlea but not in developing cochlea or retina.

The protein resides in the cell projection. The protein localises to the cilium. It is found in the nucleus. It localises to the stereocilium. Functionally, in cochlear developing hair cells, essential in organizing the USH2 complex at stereocilia ankle links. Blocks inhibition of adenylate cyclase activity mediated by ADGRV1. The protein is PDZ domain-containing protein 7 of Mus musculus (Mouse).